The chain runs to 582 residues: ATP-dependent lipid A-core flippase (582 aa).

The next 5 membrane-spanning stretches (helical) occupy residues 16–36 (LWPT…ALIL), 63–83 (VLVW…ITSY), 153–173 (IIGL…ILIV), 253–273 (PIIQ…ASFP), and 275–295 (VMDN…IALM). An ABC transmembrane type-1 domain is found at 28–310 (IVAGVALILN…LTNVNAQFQR (283 aa)). An ABC transporter domain is found at 342 to 578 (VEFRNVTFTY…RGVYAQLHKM (237 aa)). 376–383 (GRSGSGKS) is a binding site for ATP.

Belongs to the ABC transporter superfamily. Lipid exporter (TC 3.A.1.106) family. In terms of assembly, homodimer.

Its subcellular location is the cell inner membrane. The catalysed reaction is ATP + H2O + lipid A-core oligosaccharideSide 1 = ADP + phosphate + lipid A-core oligosaccharideSide 2.. Functionally, involved in lipopolysaccharide (LPS) biosynthesis. Translocates lipid A-core from the inner to the outer leaflet of the inner membrane. Transmembrane domains (TMD) form a pore in the inner membrane and the ATP-binding domain (NBD) is responsible for energy generation. The polypeptide is ATP-dependent lipid A-core flippase (Shigella flexneri).